A 76-amino-acid chain; its full sequence is MSWYEKYNIVLNPPKRCFSSCADNLTTILAEDGNNIRAILYSQPQKLKVLQDFLATSRNKMFLYKILDDEIRRVLT.

The cysteines at positions 17 and 21 are disulfide-linked.

It belongs to the orthopoxvirus OPG128 family. In terms of assembly, interacts with sulfhydryl oxidase OPG072; this interaction involves formation of a transient disulfide-bonded intermediate, allowing disulfide bond transfer. Interacts with OPG088; this interaction involves formation of a transient disulfide-bonded intermediate, allowing disulfide bond transfer.

Functionally, late protein which probably participates in disulfide bond formation by functioning as a thiol-disulfide transfer protein between membrane-associated OPG072 and OPG08. The complete pathway for formation of disulfide bonds in intracellular virion membrane proteins sequentially involves oxidation of OPG072, OPG128 and OPG08. The chain is Protein OPG128 (OPG128) from Variola virus (isolate Human/India/Ind3/1967) (VARV).